A 362-amino-acid polypeptide reads, in one-letter code: Phosphoserine aminotransferase (362 aa).

Residue Arg42 coordinates L-glutamate. Pyridoxal 5'-phosphate is bound by residues 76–77 (AS), Trp102, Thr152, Asp173, and Gln196. Lys197 carries the post-translational modification N6-(pyridoxal phosphate)lysine. Residue 238–239 (NT) coordinates pyridoxal 5'-phosphate.

Belongs to the class-V pyridoxal-phosphate-dependent aminotransferase family. SerC subfamily. In terms of assembly, homodimer. It depends on pyridoxal 5'-phosphate as a cofactor.

Its subcellular location is the cytoplasm. The catalysed reaction is O-phospho-L-serine + 2-oxoglutarate = 3-phosphooxypyruvate + L-glutamate. It carries out the reaction 4-(phosphooxy)-L-threonine + 2-oxoglutarate = (R)-3-hydroxy-2-oxo-4-phosphooxybutanoate + L-glutamate. The protein operates within amino-acid biosynthesis; L-serine biosynthesis; L-serine from 3-phospho-D-glycerate: step 2/3. It functions in the pathway cofactor biosynthesis; pyridoxine 5'-phosphate biosynthesis; pyridoxine 5'-phosphate from D-erythrose 4-phosphate: step 3/5. Functionally, catalyzes the reversible conversion of 3-phosphohydroxypyruvate to phosphoserine and of 3-hydroxy-2-oxo-4-phosphonooxybutanoate to phosphohydroxythreonine. This is Phosphoserine aminotransferase from Chromobacterium violaceum (strain ATCC 12472 / DSM 30191 / JCM 1249 / CCUG 213 / NBRC 12614 / NCIMB 9131 / NCTC 9757 / MK).